The sequence spans 997 residues: Autophagy-related protein 9 (997 aa).

Residues 1–318 (MERDEYQLPN…DVYNYYLGNG (318 aa)) are Cytoplasmic-facing. S19 carries the phosphoserine; by ATG1 modification. Over residues 29–39 (VNPSLNSQEMS) the composition is skewed to polar residues. The tract at residues 29 to 88 (VNPSLNSQEMSNFPLPDIERGSSLLHSTNDSREDVDENDLRVPESDQGTSTEEEDEVDEE) is disordered. The span at 79–88 (TEEEDEVDEE) shows a compositional bias: acidic residues. Glycyl lysine isopeptide (Lys-Gly) (interchain with G-Cter in ubiquitin) cross-links involve residues K113 and K121. S122 bears the Phosphoserine mark. 2 disordered regions span residues 128–159 (VEGS…DGFD) and 213–235 (IHHD…QKHG). Residue K138 forms a Glycyl lysine isopeptide (Lys-Gly) (interchain with G-Cter in ubiquitin) linkage. A phosphoserine mark is found at S143 and S144. Residues 144-159 (SEEEEDNEFINNDGFD) show a composition bias toward acidic residues. The segment covering 221 to 233 (ANNGPRNINGNQK) has biased composition (polar residues). Residues 319–339 (FYCIILEKILNICTLLFVVFV) traverse the membrane as a helical segment. Residues 340-376 (STYMGHCVDYSKLPTSHRVSDIIIDKCYSNSITGFTK) are Lumenal-facing. The helical transmembrane segment at 377-397 (FFLWMFYFFVILKIVQLYFDV) threads the bilayer. Residues 398–538 (QKLSELQNFY…EELQKRFMLA (141 aa)) lie on the Cytoplasmic side of the membrane. Residues 539-559 (GFLNIILAPFLVTYFVLLYFF) lie within the membrane without spanning it. Topologically, residues 560–620 (RYFNEYKTSP…DQFPKEKTNL (61 aa)) are cytoplasmic. A helical membrane pass occupies residues 621 to 641 (FLKFVSFICGSFVAILAFLTV). Residues 642-656 (FDPENFLNFEITSDR) lie on the Lumenal side of the membrane. At S657 the chain carries Phosphoserine; by ATG1. The chain crosses the membrane as a helical span at residues 657 to 677 (SVIFYITILGAIWSVSRNTIT). The Cytoplasmic segment spans residues 678-723 (QEYHVFDPEETLKELYEYTHYLPKEWEGRYHKEEIKLEFCKLYNLR). K701 is covalently cross-linked (Glycyl lysine isopeptide (Lys-Gly) (interchain with G-Cter in ubiquitin)). An intramembrane segment occupies 724–744 (IVILLRELTSLMITPFVLWFS). Residues 745–997 (LPSSAGRIVD…EYYKKSDVGR (253 aa)) are Cytoplasmic-facing. A phosphoserine mark is found at S787 and S792. At T794 the chain carries Phosphothreonine. Phosphoserine; by ATG1 is present on S802. Residue T804 is modified to Phosphothreonine; by ATG1. Phosphoserine; by ATG1 occurs at positions 831 and 842. A Phosphoserine modification is found at S864. A phosphoserine; by ATG1 mark is found at S948 and S969.

The protein belongs to the ATG9 family. Homotrimer; forms a homotrimer with a central pore that forms a path between the two membrane leaflets. Interacts with ATG23 and ATG27 to form a cycling complex for trafficking to the PAS. Interacts (via N-terminus) with ATG11, required for recruitment of ATG9 to the PAS for the Cvt pathway during nutrient-rich conditions. Interacts (via N-terminus) with ATG17; required for recruitment to the PAS during autophagy and starved conditions. Interacts with ATG2 and ATG18; required for the retrieval of ATG9 from the PAS to the cytoplasmic pool. Interacts with ATG41. Interacts with the conserved oligomeric Golgi (COG) complex subunits COG3 and COG4. Interacts with TRS85. Phosphorylated by ATG1; phosphorylation is required for autophagy and cytoplasm to vacuole transport (Cvt) vesicle formation. Phosphorylation by ATG1 regulates ATG18 interaction and preautophagosome elongation. Phosphorylation at Ser-122 is required for selective autophagy by regulating anterograde trafficking and interaction with ATG23 and ATG27. Phosphorylation at Ser-122 prevents ubiquitination by the SCF(MET30) complex. Post-translationally, ubiquitinated by the SCF(MET30) complex in normal conditions, leading to its degradation by the proteasome, thereby preventing inappropriate induction of autophagy. Ubiquitination by the SCF(MET30) complex is prevented by phosphorylation at Ser-122.

It localises to the preautophagosomal structure membrane. Its subcellular location is the cytoplasmic vesicle membrane. The protein resides in the golgi apparatus membrane. It is found in the endoplasmic reticulum membrane. The protein localises to the mitochondrion membrane. The catalysed reaction is a 1,2-diacyl-sn-glycero-3-phosphocholine(in) = a 1,2-diacyl-sn-glycero-3-phosphocholine(out). It carries out the reaction a 1,2-diacyl-sn-glycero-3-phospho-L-serine(in) = a 1,2-diacyl-sn-glycero-3-phospho-L-serine(out). It catalyses the reaction a 1,2-diacyl-sn-glycero-3-phosphoethanolamine(in) = a 1,2-diacyl-sn-glycero-3-phosphoethanolamine(out). The enzyme catalyses a 1,2-diacyl-sn-glycero-3-phospho-(1D-myo-inositol-3-phosphate)(in) = a 1,2-diacyl-sn-glycero-3-phospho-(1D-myo-inositol-3-phosphate)(out). In terms of biological role, phospholipid scramblase involved in autophagy and cytoplasm to vacuole transport (Cvt) vesicle formation. Cycles between the preautophagosomal structure/phagophore assembly site (PAS) and the cytoplasmic vesicle pool and supplies membrane for the growing autophagosome. Lipid scramblase activity plays a key role in preautophagosomal structure/phagophore assembly by distributing the phospholipids that arrive through ATG2 from the cytoplasmic to the luminal leaflet of the bilayer, thereby driving autophagosomal membrane expansion. Required for mitophagy. Also involved in endoplasmic reticulum-specific autophagic process and is essential for the survival of cells subjected to severe ER stress. Recruits vesicle-tethering proteins TRS85 and YPT1 to the autophagosome formation site. Also recruits ATG23 and ATG8 to the PAS. This is Autophagy-related protein 9 from Saccharomyces cerevisiae (strain ATCC 204508 / S288c) (Baker's yeast).